A 117-amino-acid polypeptide reads, in one-letter code: MQAKAVLRHTPTSPRKMRIVAGLIRGKQVDQAKAILMNSTKAASRNVMQTLKSAVANYSQKNPDTRAGDNDLFIKEIFVDEGPTIKRMLPAPMGRAYRIRKRSNHLTIIVDTVNPVS.

The protein belongs to the universal ribosomal protein uL22 family. Part of the 50S ribosomal subunit.

In terms of biological role, this protein binds specifically to 23S rRNA; its binding is stimulated by other ribosomal proteins, e.g. L4, L17, and L20. It is important during the early stages of 50S assembly. It makes multiple contacts with different domains of the 23S rRNA in the assembled 50S subunit and ribosome. Its function is as follows. The globular domain of the protein is located near the polypeptide exit tunnel on the outside of the subunit, while an extended beta-hairpin is found that lines the wall of the exit tunnel in the center of the 70S ribosome. The chain is Large ribosomal subunit protein uL22 from Chlorobium phaeobacteroides (strain BS1).